A 286-amino-acid polypeptide reads, in one-letter code: Phosphatidylserine decarboxylase proenzyme (286 aa).

Active-site charge relay system; for autoendoproteolytic cleavage activity residues include Asp-90, His-147, and Ser-250. The active-site Schiff-base intermediate with substrate; via pyruvic acid; for decarboxylase activity is the Ser-250. Ser-250 carries the post-translational modification Pyruvic acid (Ser); by autocatalysis.

It belongs to the phosphatidylserine decarboxylase family. PSD-B subfamily. Prokaryotic type I sub-subfamily. As to quaternary structure, heterodimer of a large membrane-associated beta subunit and a small pyruvoyl-containing alpha subunit. Pyruvate is required as a cofactor. In terms of processing, is synthesized initially as an inactive proenzyme. Formation of the active enzyme involves a self-maturation process in which the active site pyruvoyl group is generated from an internal serine residue via an autocatalytic post-translational modification. Two non-identical subunits are generated from the proenzyme in this reaction, and the pyruvate is formed at the N-terminus of the alpha chain, which is derived from the carboxyl end of the proenzyme. The autoendoproteolytic cleavage occurs by a canonical serine protease mechanism, in which the side chain hydroxyl group of the serine supplies its oxygen atom to form the C-terminus of the beta chain, while the remainder of the serine residue undergoes an oxidative deamination to produce ammonia and the pyruvoyl prosthetic group on the alpha chain. During this reaction, the Ser that is part of the protease active site of the proenzyme becomes the pyruvoyl prosthetic group, which constitutes an essential element of the active site of the mature decarboxylase.

Its subcellular location is the cell membrane. The enzyme catalyses a 1,2-diacyl-sn-glycero-3-phospho-L-serine + H(+) = a 1,2-diacyl-sn-glycero-3-phosphoethanolamine + CO2. It functions in the pathway phospholipid metabolism; phosphatidylethanolamine biosynthesis; phosphatidylethanolamine from CDP-diacylglycerol: step 2/2. Functionally, catalyzes the formation of phosphatidylethanolamine (PtdEtn) from phosphatidylserine (PtdSer). The polypeptide is Phosphatidylserine decarboxylase proenzyme (Psychromonas ingrahamii (strain DSM 17664 / CCUG 51855 / 37)).